The sequence spans 815 residues: cGMP-specific 3',5'-cyclic phosphodiesterase delta (815 aa).

Over 1–56 (MNEYNNDNMEQEKEKKKEEQKYKNIIKKEYFIFPRLYDKNKEIEYNKLRIHNIKEY) the chain is Cytoplasmic. Residues 57–77 (ICIHLTISLFIILIECFVFSF) form a helical membrane-spanning segment. The Extracellular segment spans residues 78 to 86 (NLNIKDTTY). A helical transmembrane segment spans residues 87–107 (VEICVVIFSILNCLMHIVVLI). Residues 108-120 (KMYFFTSESVYTK) lie on the Cytoplasmic side of the membrane. A helical transmembrane segment spans residues 121 to 141 (GVFIGYIVLNQVFQFLSLYFF). Residues 142 to 160 (TKRNEQSKNDIAHLKYYDN) are Extracellular-facing. A helical membrane pass occupies residues 161–181 (SFNLYVHFFVDSVFILCLPAL). At 182-183 (SF) the chain is on the cytoplasmic side. The chain crosses the membrane as a helical span at residues 184–204 (FLSVLFMMMFLCLNILLINMI). Residues 205-210 (KFNKTN) are Extracellular-facing. N-linked (GlcNAc...) asparagine glycosylation occurs at Asn-207. A helical membrane pass occupies residues 211-231 (YGSDIYHICLLSVVLLMFLIL). The Cytoplasmic portion of the chain corresponds to 232-815 (RYMMEERNRL…FKEEIKHGKL (584 aa)). The 379-residue stretch at 384 to 762 (YEVEVLKNIK…QTWRLIEKNI (379 aa)) folds into the PDEase domain. His-459 acts as the Proton donor in catalysis. 459 to 463 (HNANH) provides a ligand contact to 3',5'-cyclic GMP. Residues His-463, His-499, Asp-500, and Asp-616 each contribute to the a divalent metal cation site. 3',5'-cyclic GMP is bound by residues Asp-500, Asp-616, and Gln-715.

Belongs to the cyclic nucleotide phosphodiesterase family. The cofactor is a divalent metal cation.

Its subcellular location is the membrane. The enzyme catalyses 3',5'-cyclic GMP + H2O = GMP + H(+). Its pathway is purine metabolism; 3',5'-cyclic GMP degradation; GMP from 3',5'-cyclic GMP: step 1/1. Its function is as follows. Specifically hydrolyzes the second messenger cGMP, which is a key regulator of many important physiological processes. Probably by regulating cGMP levels, required for activation of gametogenesis. The chain is cGMP-specific 3',5'-cyclic phosphodiesterase delta from Plasmodium falciparum (isolate 3D7).